The primary structure comprises 710 residues: MKKTFKLILVLMLSLTLVFGLTAPIQAASDTAVSNVVNYSTDVIYQIVTDRFVDGNTSNNPTGDLYDPTHTSLKKYFGGDWQGIINKINDGYLTGMGVTAIWISQPVENIYAVLPDSTFGGSTSYHGYWARDFKRTNPYFGSFTDFQNLINTAHAHNIKVIIDFAPNHTSPASETDPTYAENGRLYDNGTLLGGYTNDTNGYFHHYGGTDFSSYEDGIYRNLFDLADLNQQNSTIDSYLKSAIKVWLDMGIDGIRLDAVKHMPFGWQKNFMDSILSYRPVFTFGEWFLGTNEIDVNNTYFANESGMSLLDFRFSQKVRQVFRDNTDTMYGLDSMIQSTASDYNFINDMVTFIDNHDMDRFYNGGSTRPVEQALAFTLTSRGVPAIYYGTEQYMTGNGDPYNRAMMTSFNTSTTAYNVIKKLAPLRKSNPAIAYGTTQQRWINNDVYIYERKFGNNVALVAINRNLSTSYNITGLYTALPAGTYTDVLGGLLNGNSISVASDGSVTPFTLSAGEVAVWQYVSSSNSPLIGHVGPTMTKAGQTITIDGRGFGTTSGQVLFGSTAGTIVSWDDTEVKVKVPSVTPGKYNISLKTSSGATSNTYNNINILTGNQICVRFVVNNASTVYGENVYLTGNVAELGNWDTSKAIGPMFNQVVYQYPTWYYDVSVPAGTTIQFKFIKKNGNTITWEGGSNHTYTVPSSSTGTVIVNWQQ.

A signal peptide spans 1 to 27 (MKKTFKLILVLMLSLTLVFGLTAPIQA). Positions 54, 56, 59, 60, 78, and 80 each coordinate Ca(2+). 128–129 (YW) is a substrate binding site. Residue Asn-167 participates in Ca(2+) binding. His-168 contacts substrate. Ile-218 serves as a coordination point for Ca(2+). 221–224 (NLFD) lines the substrate pocket. Residue Asp-227 coordinates Ca(2+). Substrate is bound at residue Arg-255. Asp-257 functions as the Nucleophile in the catalytic mechanism. Residue 260 to 261 (KH) participates in substrate binding. Residue His-261 coordinates Ca(2+). Residue Glu-285 is the Proton donor of the active site. Residues His-355, Asp-398, and Arg-402 each coordinate substrate. The IPT/TIG domain occupies 526–603 (PLIGHVGPTM…GATSNTYNNI (78 aa)). The CBM20 domain maps to 605-710 (ILTGNQICVR…TGTVIVNWQQ (106 aa)).

The protein belongs to the glycosyl hydrolase 13 family. Ca(2+) serves as cofactor.

The protein resides in the secreted. The enzyme catalyses Cyclizes part of a (1-&gt;4)-alpha-D-glucan chain by formation of a (1-&gt;4)-alpha-D-glucosidic bond.. Its function is as follows. Degrades starch to alpha-, beta-, and gamma-cyclodextrins, as well as linear sugars. The protein is Cyclomaltodextrin glucanotransferase (amyA) of Thermoanaerobacterium thermosulfurigenes (Clostridium thermosulfurogenes).